Reading from the N-terminus, the 114-residue chain is Large ribosomal subunit protein bL19 (114 aa).

The protein belongs to the bacterial ribosomal protein bL19 family.

In terms of biological role, this protein is located at the 30S-50S ribosomal subunit interface and may play a role in the structure and function of the aminoacyl-tRNA binding site. This is Large ribosomal subunit protein bL19 from Thermobifida fusca (strain YX).